The primary structure comprises 313 residues: Solute carrier family 35 member E3 (313 aa).

9 consecutive transmembrane segments (helical) span residues 17–37 (GLLF…WIYV), 40–60 (GFPN…GLYI), 71–91 (SLPL…VVFT), 126–146 (FSVR…LNSY), 154–174 (LGMV…VWVG), 187–206 (LLYY…VPFF), 225–245 (LMVL…YWII), 252–272 (TYNM…YILF), and 275–295 (PLSV…LTYT).

Belongs to the TPT transporter family. SLC35E subfamily.

The protein resides in the membrane. Its function is as follows. Putative transporter. The chain is Solute carrier family 35 member E3 (Slc35e3) from Mus musculus (Mouse).